Consider the following 130-residue polypeptide: MIGEWNNGTGRRKSSVARVFLKKGSGKITVNGKDIQQYFGRETSIMIAKQPLALTNHVETFDIQINVHGGGESGQAGAARHGITRALIDYDATLKPALSQAGFVTRDAREVERKKVGLHSARRAKQFSKR.

Belongs to the universal ribosomal protein uS9 family.

This Acidovorax ebreus (strain TPSY) (Diaphorobacter sp. (strain TPSY)) protein is Small ribosomal subunit protein uS9.